A 438-amino-acid chain; its full sequence is Probable D-serine dehydratase (438 aa).

K114 bears the N6-(pyridoxal phosphate)lysine mark.

The protein belongs to the serine/threonine dehydratase family. DsdA subfamily. Pyridoxal 5'-phosphate is required as a cofactor.

The enzyme catalyses D-serine = pyruvate + NH4(+). This chain is Probable D-serine dehydratase, found in Histophilus somni (strain 2336) (Haemophilus somnus).